The following is a 287-amino-acid chain: Bifunctional protein FolD (287 aa).

Residues 160-162, S189, and I230 contribute to the NADP(+) site; that span reads GRS.

Belongs to the tetrahydrofolate dehydrogenase/cyclohydrolase family. Homodimer.

The catalysed reaction is (6R)-5,10-methylene-5,6,7,8-tetrahydrofolate + NADP(+) = (6R)-5,10-methenyltetrahydrofolate + NADPH. It catalyses the reaction (6R)-5,10-methenyltetrahydrofolate + H2O = (6R)-10-formyltetrahydrofolate + H(+). The protein operates within one-carbon metabolism; tetrahydrofolate interconversion. Catalyzes the oxidation of 5,10-methylenetetrahydrofolate to 5,10-methenyltetrahydrofolate and then the hydrolysis of 5,10-methenyltetrahydrofolate to 10-formyltetrahydrofolate. The chain is Bifunctional protein FolD from Chlamydia felis (strain Fe/C-56) (Chlamydophila felis).